The primary structure comprises 229 residues: ATP synthase subunit a 3 (229 aa).

6 helical membrane passes run 25-45, 86-106, 111-131, 142-162, 181-201, and 202-222; these read ADAV…SFLA, VATI…PGFF, NINT…VVGI, FCGP…IGHL, LVLI…MMLM, and GVLV…IYIQ.

The protein belongs to the ATPase A chain family. As to quaternary structure, F-type ATPases have 2 components, CF(1) - the catalytic core - and CF(0) - the membrane proton channel. CF(1) has five subunits: alpha(3), beta(3), gamma(1), delta(1), epsilon(1). CF(0) has three main subunits: a(1), b(2) and c(9-12). The alpha and beta chains form an alternating ring which encloses part of the gamma chain. CF(1) is attached to CF(0) by a central stalk formed by the gamma and epsilon chains, while a peripheral stalk is formed by the delta and b chains.

It localises to the cell inner membrane. Functionally, key component of the proton channel; it plays a direct role in the translocation of protons across the membrane. The chain is ATP synthase subunit a 3 from Pelobacter propionicus (strain DSM 2379 / NBRC 103807 / OttBd1).